A 437-amino-acid chain; its full sequence is Methylenetetrahydrofolate--tRNA-(uracil-5-)-methyltransferase TrmFO (437 aa).

10–15 (GAGLAG) serves as a coordination point for FAD.

This sequence belongs to the MnmG family. TrmFO subfamily. Requires FAD as cofactor.

It localises to the cytoplasm. It carries out the reaction uridine(54) in tRNA + (6R)-5,10-methylene-5,6,7,8-tetrahydrofolate + NADH + H(+) = 5-methyluridine(54) in tRNA + (6S)-5,6,7,8-tetrahydrofolate + NAD(+). The catalysed reaction is uridine(54) in tRNA + (6R)-5,10-methylene-5,6,7,8-tetrahydrofolate + NADPH + H(+) = 5-methyluridine(54) in tRNA + (6S)-5,6,7,8-tetrahydrofolate + NADP(+). In terms of biological role, catalyzes the folate-dependent formation of 5-methyl-uridine at position 54 (M-5-U54) in all tRNAs. The chain is Methylenetetrahydrofolate--tRNA-(uracil-5-)-methyltransferase TrmFO from Brevibacillus brevis (strain 47 / JCM 6285 / NBRC 100599).